A 556-amino-acid chain; its full sequence is Transcription factor IIIB 70 kDa subunit (556 aa).

A TFIIB-type zinc finger spans residues 8–41 (SSRKCKNCGSTDFVRDISNTTNELICKVCGLVTE). Cysteine 12, cysteine 15, cysteine 33, and cysteine 36 together coordinate Zn(2+). 2 consecutive repeat copies span residues 98–174 (LKAV…TFLK) and 193–272 (IQHF…RLNE). Residues 98–272 (LKAVSYALNI…EETLQQRLNE (175 aa)) form an interaction with TBP and with the Pol III subunit C34 region. The tract at residues 284–556 (KEFRDDETEV…DAINGLFGQK (273 aa)) is interaction with TBP. 2 disordered regions span residues 287 to 309 (RDDETEVNEGERSAESKPPSFDK) and 477 to 501 (ADLASGNTSLRKKRSKRTNRNQSSA). The span at 295–309 (EGERSAESKPPSFDK) shows a compositional bias: basic and acidic residues. The segment covering 486 to 495 (LRKKRSKRTN) has biased composition (basic residues).

Belongs to the TFIIB family. As to quaternary structure, TFIIIB comprises the TATA-binding protein (TBP), the B-related factor (BRF) and a 70 kDa polypeptide.

It is found in the nucleus. Functionally, general activator of RNA polymerase III transcription. Interacts with TBP. Binds to Pol III subunit C34 and to the TAU135 component of TFIIIC. In Kluyveromyces lactis (strain ATCC 8585 / CBS 2359 / DSM 70799 / NBRC 1267 / NRRL Y-1140 / WM37) (Yeast), this protein is Transcription factor IIIB 70 kDa subunit (TDS4).